We begin with the raw amino-acid sequence, 325 residues long: MSQITLEELPGVGPATAEKLKEAGFNTIEAVAVASPSELATTAEIGESTAAKIINAARQAADIGGFETGDIVLERRKMVGKLTTGCMEFDEMMGGGIETQAITELYGEFGSGKTQLAHQFAVNVQMDREHGGLNGSVIIIDTENTFRPERIAQMVKGLSEKYGMELDPEEFLQNIHVARAYNSNHQILLVDSATDLANELREMGKPVRLLIVDSLMAHFRAEYVGRGTLADRQQKLNKHMHGLLRFGDLFNASVVVTNQVMAKPDAFFGDPTRPVGGHVVGHTATFRLYLRKSKGDKRIIRLVDSPNLPEGEAVIAVTTAGLTDQ.

Residue 107-114 (GEFGSGKT) participates in ATP binding.

The protein belongs to the eukaryotic RecA-like protein family.

Functionally, involved in DNA repair and in homologous recombination. Binds and assemble on single-stranded DNA to form a nucleoprotein filament. Hydrolyzes ATP in a ssDNA-dependent manner and promotes DNA strand exchange between homologous DNA molecules. This chain is DNA repair and recombination protein RadA, found in Methanosarcina barkeri (strain Fusaro / DSM 804).